Here is a 387-residue protein sequence, read N- to C-terminus: Protein mab-21-like 3 (387 aa).

This sequence belongs to the mab-21 family.

In Danio rerio (Zebrafish), this protein is Protein mab-21-like 3 (mab21L3).